We begin with the raw amino-acid sequence, 166 residues long: MIYIDNRQNKIKVNEELENKIKEIIDYALKEEKVNIDYEISVVFIDNNSIKEINKDYRNIDKATDVLSFPMLDYEEGEVFKDIYLNYEFDESDLDEGNLVLGDIALSLEKAEEQSKEFGHSFLRETCYLTIHSVLHLLGYDHMEEDEKVIMRQREEEILKSFNLHR.

Positions 132, 136, and 142 each coordinate Zn(2+).

The protein belongs to the endoribonuclease YbeY family. Requires Zn(2+) as cofactor.

Its subcellular location is the cytoplasm. Single strand-specific metallo-endoribonuclease involved in late-stage 70S ribosome quality control and in maturation of the 3' terminus of the 16S rRNA. This chain is Endoribonuclease YbeY, found in Clostridium botulinum (strain Kyoto / Type A2).